The sequence spans 99 residues: C-C motif chemokine 17 (99 aa).

The N-terminal stretch at 1–23 is a signal peptide; it reads MMSLKLLLLVMLLLGASLQVTHA. 2 cysteine pairs are disulfide-bonded: cysteine 33-cysteine 57 and cysteine 34-cysteine 73.

It belongs to the intercrine beta (chemokine CC) family. In terms of tissue distribution, expressed in thymus and also in spleen, lung, lymph node, kidney, small intestine, colon and skin.

The protein localises to the secreted. Its function is as follows. Chemokine, which displays chemotactic activity for T lymphocytes, preferentially Th2 cells, but not monocytes or granulocytes. Therefore plays an important role in a wide range of inflammatory and immunological processes. Acts by binding to CCR4 at T-cell surface. Mediates GM-CSF/CSF2-driven pain and inflammation. In the brain, required to maintain the typical, highly branched morphology of hippocampal microglia under homeostatic conditions. May be important for the appropriate adaptation of microglial morphology and synaptic plasticity to acute lipopolysaccharide (LPS)-induced neuroinflammation. Plays a role in wound healing, mainly by inducing fibroblast migration into the wound. This is C-C motif chemokine 17 (CCL17) from Felis catus (Cat).